Consider the following 225-residue polypeptide: Cobalt transport protein CbiM (225 aa).

6 helical membrane-spanning segments follow: residues 7–27, 43–63, 76–96, 108–128, 143–163, and 175–195; these read VLPL…VAIA, PFVG…VPVP, LAAV…ALLI, TLGA…YFAF, FLAG…ALAL, and FTGV…LEGV.

The protein belongs to the CbiM family. Forms an energy-coupling factor (ECF) transporter complex composed of an ATP-binding protein (A component, CbiO), a transmembrane protein (T component, CbiQ) and 2 possible substrate-capture proteins (S components, CbiM and CbiN) of unknown stoichimetry.

It localises to the cell inner membrane. It participates in cofactor biosynthesis; adenosylcobalamin biosynthesis. Its function is as follows. Part of the energy-coupling factor (ECF) transporter complex CbiMNOQ involved in cobalt import. The protein is Cobalt transport protein CbiM of Sorangium cellulosum (strain So ce56) (Polyangium cellulosum (strain So ce56)).